Reading from the N-terminus, the 212-residue chain is UDP-N-acetylglucosamine transferase subunit ALG13 (212 aa).

The protein belongs to the glycosyltransferase 28 family. Heterodimer with ALG14 to form a functional enzyme.

The protein localises to the endoplasmic reticulum. It carries out the reaction an N-acetyl-alpha-D-glucosaminyl-diphospho-di-trans,poly-cis-dolichol + UDP-N-acetyl-alpha-D-glucosamine = an N,N'-diacetylchitobiosyl-diphospho-di-trans,poly-cis-dolichol + UDP + H(+). Its function is as follows. Involved in protein N-glycosylation. Essential for the second step of the dolichol-linked oligosaccharide pathway. The chain is UDP-N-acetylglucosamine transferase subunit ALG13 (ALG13) from Debaryomyces hansenii (strain ATCC 36239 / CBS 767 / BCRC 21394 / JCM 1990 / NBRC 0083 / IGC 2968) (Yeast).